A 483-amino-acid chain; its full sequence is UDP-N-acetylmuramate--L-alanine ligase (483 aa).

An ATP-binding site is contributed by 112–118 (GTHGKTT).

The protein belongs to the MurCDEF family.

Its subcellular location is the cytoplasm. It carries out the reaction UDP-N-acetyl-alpha-D-muramate + L-alanine + ATP = UDP-N-acetyl-alpha-D-muramoyl-L-alanine + ADP + phosphate + H(+). The protein operates within cell wall biogenesis; peptidoglycan biosynthesis. In terms of biological role, cell wall formation. The chain is UDP-N-acetylmuramate--L-alanine ligase from Ralstonia pickettii (strain 12J).